Reading from the N-terminus, the 270-residue chain is Putative phosphoenolpyruvate synthase regulatory protein (270 aa).

150-157 contributes to the ADP binding site; it reads GVSRCGKT.

The protein belongs to the pyruvate, phosphate/water dikinase regulatory protein family. PSRP subfamily.

It carries out the reaction [pyruvate, water dikinase] + ADP = [pyruvate, water dikinase]-phosphate + AMP + H(+). The catalysed reaction is [pyruvate, water dikinase]-phosphate + phosphate + H(+) = [pyruvate, water dikinase] + diphosphate. In terms of biological role, bifunctional serine/threonine kinase and phosphorylase involved in the regulation of the phosphoenolpyruvate synthase (PEPS) by catalyzing its phosphorylation/dephosphorylation. The sequence is that of Putative phosphoenolpyruvate synthase regulatory protein from Shewanella frigidimarina (strain NCIMB 400).